Here is a 451-residue protein sequence, read N- to C-terminus: UDP-N-acetylmuramoylalanine--D-glutamate ligase (451 aa).

Glycine 119 to threonine 125 contributes to the ATP binding site.

This sequence belongs to the MurCDEF family.

It localises to the cytoplasm. The catalysed reaction is UDP-N-acetyl-alpha-D-muramoyl-L-alanine + D-glutamate + ATP = UDP-N-acetyl-alpha-D-muramoyl-L-alanyl-D-glutamate + ADP + phosphate + H(+). The protein operates within cell wall biogenesis; peptidoglycan biosynthesis. In terms of biological role, cell wall formation. Catalyzes the addition of glutamate to the nucleotide precursor UDP-N-acetylmuramoyl-L-alanine (UMA). This is UDP-N-acetylmuramoylalanine--D-glutamate ligase from Streptococcus mutans serotype c (strain ATCC 700610 / UA159).